The chain runs to 568 residues: Peroxisomal leader peptide-processing protease (568 aa).

The segment at 332–568 (TPRGLPLRDL…PLSEVPRSKL (237 aa)) is serine protease. Catalysis depends on charge relay system residues His374, Asp410, and Ser483.

The protein belongs to the peptidase S1B family. Homodimer. Forms a heterodimer with the C-terminal cleavage product (49 kDa form). Forms a heterodimer with the N-terminal cleavage product (10 kDa form). Interacts with PEX5. Interacts with LONP2. Self-cleavage gives rise to an N-terminal 10-kDa fragment and C-terminal 49-kDa fragment upon import into the peroxisomes. The full-lengh TYSND1 is the active the proteolytic processing of PTS1- and PTS2-proteins and in self-cleavage, and intermolecular self-cleavage of TYSND1 down-regulates its protease activity.

It is found in the peroxisome. With respect to regulation, inhibited by N-ethylmaleimide (NEM). Not affected by leupeptin or trans-epoxysuccinyl-l-leucylamido-(4-gianidino) butane (E64). Peroxisomal protease that mediates both the removal of the leader peptide from proteins containing a PTS2 target sequence and processes several PTS1-containing proteins. Catalyzes the processing of PTS1-proteins involved in the peroxisomal beta-oxidation of fatty acids. The chain is Peroxisomal leader peptide-processing protease (Tysnd1) from Mus musculus (Mouse).